The following is an 84-amino-acid chain: Cytochrome b559 subunit alpha (84 aa).

Residues 22–36 form a helical membrane-spanning segment; the sequence is VIHSITIPALFVAGW. Histidine 24 is a heme binding site.

The protein belongs to the PsbE/PsbF family. In terms of assembly, heterodimer of an alpha subunit and a beta subunit. PSII is composed of 1 copy each of membrane proteins PsbA, PsbB, PsbC, PsbD, PsbE, PsbF, PsbH, PsbI, PsbJ, PsbK, PsbL, PsbM, PsbT, PsbX, PsbY, PsbZ, Psb30/Ycf12, at least 3 peripheral proteins of the oxygen-evolving complex and a large number of cofactors. It forms dimeric complexes. Requires heme b as cofactor.

The protein resides in the plastid. The protein localises to the chloroplast thylakoid membrane. Its function is as follows. This b-type cytochrome is tightly associated with the reaction center of photosystem II (PSII). PSII is a light-driven water:plastoquinone oxidoreductase that uses light energy to abstract electrons from H(2)O, generating O(2) and a proton gradient subsequently used for ATP formation. It consists of a core antenna complex that captures photons, and an electron transfer chain that converts photonic excitation into a charge separation. The polypeptide is Cytochrome b559 subunit alpha (Porphyra purpurea (Red seaweed)).